The primary structure comprises 434 residues: Glutamate-1-semialdehyde 2,1-aminomutase 1 (434 aa).

At K270 the chain carries N6-(pyridoxal phosphate)lysine.

This sequence belongs to the class-III pyridoxal-phosphate-dependent aminotransferase family. HemL subfamily. In terms of assembly, homodimer. It depends on pyridoxal 5'-phosphate as a cofactor.

The protein localises to the cytoplasm. It carries out the reaction (S)-4-amino-5-oxopentanoate = 5-aminolevulinate. It functions in the pathway porphyrin-containing compound metabolism; protoporphyrin-IX biosynthesis; 5-aminolevulinate from L-glutamyl-tRNA(Glu): step 2/2. The chain is Glutamate-1-semialdehyde 2,1-aminomutase 1 from Bacillus cereus (strain AH187).